The primary structure comprises 388 residues: UTP--glucose-1-phosphate uridylyltransferase (388 aa).

Asp118 contributes to the Mg(2+) binding site.

Belongs to the CugP-type UDP-glucose pyrophosphorylase family. Mg(2+) is required as a cofactor.

It carries out the reaction alpha-D-glucose 1-phosphate + UTP + H(+) = UDP-alpha-D-glucose + diphosphate. In terms of biological role, catalyzes the formation of UDP-glucose, from UTP and glucose 1-phosphate. Is highly specific since it cannot use other NTPs such as dTTP, CTP, ATP, and GTP, and other sugar-1P such as GlcNAc-1P, Gal-1P, and Man-1P, as substrates. Has probably a central and essential role as the substrate supplier for galactolipid synthesis; galactolipids are major constituents of the photosynthetic thylakoid membrane and important for photosynthetic activity. This Synechocystis sp. (strain ATCC 27184 / PCC 6803 / Kazusa) protein is UTP--glucose-1-phosphate uridylyltransferase.